A 182-amino-acid polypeptide reads, in one-letter code: Early nodulin-like protein 10 (182 aa).

The signal sequence occupies residues 1–20 (MSSVMMCCCLLLLFGLLSEG). Residues 21 to 125 (REILVGGKSN…GEKLRVVVLS (105 aa)) form the Phytocyanin domain. N-linked (GlcNAc...) asparagine glycosylation occurs at Asn65. Cys79 and Cys113 are disulfide-bonded. Asn129 and Asn148 each carry an N-linked (GlcNAc...) asparagine glycan. Asn157 carries the GPI-anchor amidated asparagine lipid modification. The propeptide at 158–182 (AHIMNKGSLNTAWSLLLLLPLGLLV) is removed in mature form.

This sequence belongs to the early nodulin-like (ENODL) family. In terms of tissue distribution, mostly expressed in flowers, and, to a lower extent, in leaves, but barely in seedlings, stems, seeds and roots.

Its subcellular location is the cell membrane. Functionally, may act as a carbohydrate transporter. The protein is Early nodulin-like protein 10 of Arabidopsis thaliana (Mouse-ear cress).